Reading from the N-terminus, the 684-residue chain is Homoaconitase, mitochondrial (684 aa).

The [4Fe-4S] cluster site is built by cysteine 337, cysteine 397, and cysteine 400.

It belongs to the aconitase/IPM isomerase family. The cofactor is [4Fe-4S] cluster.

The protein localises to the mitochondrion. The enzyme catalyses (2R,3S)-homoisocitrate = cis-homoaconitate + H2O. It participates in amino-acid biosynthesis; L-lysine biosynthesis via AAA pathway; L-alpha-aminoadipate from 2-oxoglutarate: step 3/5. In terms of biological role, catalyzes the reversible hydration of cis-homoaconitate to (2R,3S)-homoisocitrate, a step in the alpha-aminoadipate pathway for lysine biosynthesis. The polypeptide is Homoaconitase, mitochondrial (LYS4) (Candida albicans (strain SC5314 / ATCC MYA-2876) (Yeast)).